A 326-amino-acid polypeptide reads, in one-letter code: Methionyl-tRNA formyltransferase (326 aa).

A (6S)-5,6,7,8-tetrahydrofolate-binding site is contributed by 110 to 113; it reads SLLP. The tract at residues 307–326 is disordered; sequence VGTRFSPPEAPQREPAPGEA.

Belongs to the Fmt family.

The catalysed reaction is L-methionyl-tRNA(fMet) + (6R)-10-formyltetrahydrofolate = N-formyl-L-methionyl-tRNA(fMet) + (6S)-5,6,7,8-tetrahydrofolate + H(+). Its function is as follows. Attaches a formyl group to the free amino group of methionyl-tRNA(fMet). The formyl group appears to play a dual role in the initiator identity of N-formylmethionyl-tRNA by promoting its recognition by IF2 and preventing the misappropriation of this tRNA by the elongation apparatus. This chain is Methionyl-tRNA formyltransferase, found in Symbiobacterium thermophilum (strain DSM 24528 / JCM 14929 / IAM 14863 / T).